We begin with the raw amino-acid sequence, 162 residues long: NADH-quinone oxidoreductase subunit I (162 aa).

2 consecutive 4Fe-4S ferredoxin-type domains span residues 52–82 (LRRY…IEAG) and 93–122 (TRYD…EGPN). Residues Cys-62, Cys-65, Cys-68, Cys-72, Cys-102, Cys-105, Cys-108, and Cys-112 each coordinate [4Fe-4S] cluster.

Belongs to the complex I 23 kDa subunit family. NDH-1 is composed of 14 different subunits. Subunits NuoA, H, J, K, L, M, N constitute the membrane sector of the complex. Requires [4Fe-4S] cluster as cofactor.

Its subcellular location is the cell inner membrane. The catalysed reaction is a quinone + NADH + 5 H(+)(in) = a quinol + NAD(+) + 4 H(+)(out). In terms of biological role, NDH-1 shuttles electrons from NADH, via FMN and iron-sulfur (Fe-S) centers, to quinones in the respiratory chain. The immediate electron acceptor for the enzyme in this species is believed to be ubiquinone. Couples the redox reaction to proton translocation (for every two electrons transferred, four hydrogen ions are translocated across the cytoplasmic membrane), and thus conserves the redox energy in a proton gradient. The chain is NADH-quinone oxidoreductase subunit I from Methylobacterium nodulans (strain LMG 21967 / CNCM I-2342 / ORS 2060).